Reading from the N-terminus, the 511-residue chain is ATP synthase subunit alpha 1 (511 aa).

174-181 (GDRQTGKT) contacts ATP.

The protein belongs to the ATPase alpha/beta chains family. As to quaternary structure, F-type ATPases have 2 components, CF(1) - the catalytic core - and CF(0) - the membrane proton channel. CF(1) has five subunits: alpha(3), beta(3), gamma(1), delta(1), epsilon(1). CF(0) has four main subunits: a(1), b(1), b'(1) and c(9-12).

Its subcellular location is the cell inner membrane. It catalyses the reaction ATP + H2O + 4 H(+)(in) = ADP + phosphate + 5 H(+)(out). Produces ATP from ADP in the presence of a proton gradient across the membrane. The alpha chain is a regulatory subunit. The protein is ATP synthase subunit alpha 1 of Chlorobium luteolum (strain DSM 273 / BCRC 81028 / 2530) (Pelodictyon luteolum).